The following is a 264-amino-acid chain: MVQQGFSIDLILARSKEEATDGKDSMSSRPHIPCAPQPLPPTKYAKEMPRKKDGQDVQEHTTSFQCSLGEQVINRPSANPSLAAMHRSSGSSDEFSPPGSEDDSTESSGRSSQENDTEQREKSPKSDLQRRLRTAFTPQQISKLEQAFNKQRYLGAPERKKLATSLQLSEIQVKTWFQNRRMKLKRQIQDKQHSLVPPPVCYPQTFPYYPGGFPVPLNSGSFYQPRALPFQAPQHSYIPQPLHHHVRMSSHQEQYPPLFGAQYM.

Composition is skewed to basic and acidic residues over residues 16-26 and 44-59; these read KEEATDGKDSM and YAKEMPRKKDGQDVQE. The segment at 16 to 140 is disordered; the sequence is KEEATDGKDS…RLRTAFTPQQ (125 aa). Residues 60–80 show a composition bias toward polar residues; sequence HTTSFQCSLGEQVINRPSANP. Over residues 117-130 the composition is skewed to basic and acidic residues; that stretch reads TEQREKSPKSDLQR. The homeobox DNA-binding region spans 129–188; the sequence is QRRLRTAFTPQQISKLEQAFNKQRYLGAPERKKLATSLQLSEIQVKTWFQNRRMKLKRQI.

In terms of tissue distribution, expressed in the ventral marginal zone of gastrulae. At stage 11.5, also expressed in the ventral region of the animal cap (ectoderm). At the end of gastrulation, predominantly localized to the ventral and lateral regions of the closing slit blastopore. At early tail bud stage, expression is maintained only in the forming proctodeum.

It is found in the nucleus. Transcriptional repressor. Cooperates with vent2 in a ventral signaling pathway downstream of bmp4, which antagonizes the Spemann organizer and dorsal mesoderm formation, and leads to ventral mesoderm formation. Acts downstream of bmp4 to repress transcription of foxa4-B/XFD-1'. Binds to DNA with preference for the target sequence 5'-CTATT[T/C]G-3'. Also binds 5'-TGCATTTTG-3' at a lower frequency, and occasionally 5'-TTGATC-3'. Binds to the homeobox 2 (HBX2) repressor element in the promoter of the myf5 gene and represses myf5 transcription in the ventral domain. In Xenopus laevis (African clawed frog), this protein is Homeobox protein vent1 (vent1).